The sequence spans 120 residues: Flagellar protein FliT (120 aa).

The segment at 1 to 50 is required for homodimerization; the sequence is MENLSPLLIEYQGLLKLIRNIKAMALNGLWDDVVEQEIVYIQSIERISQI. The interval 60–98 is fliD binding; that stretch reads VQLQFRQLLQDILDTESQVKELLQNRMQELAVLIQQSQN.

The protein belongs to the FliT family. As to quaternary structure, homodimer. Interacts with FliD and FlhC.

It is found in the cytoplasm. The protein localises to the cytosol. Functionally, dual-function protein that regulates the transcription of class 2 flagellar operons and that also acts as an export chaperone for the filament-capping protein FliD. As a transcriptional regulator, acts as an anti-FlhDC factor; it directly binds FlhC, thus inhibiting the binding of the FlhC/FlhD complex to class 2 promoters, resulting in decreased expression of class 2 flagellar operons. As a chaperone, effects FliD transition to the membrane by preventing its premature polymerization, and by directing it to the export apparatus. The sequence is that of Flagellar protein FliT from Dickeya chrysanthemi (Pectobacterium chrysanthemi).